Reading from the N-terminus, the 449-residue chain is Kynurenine 3-monooxygenase (449 aa).

The protein belongs to the aromatic-ring hydroxylase family. KMO subfamily. FAD serves as cofactor.

The enzyme catalyses L-kynurenine + NADPH + O2 + H(+) = 3-hydroxy-L-kynurenine + NADP(+) + H2O. It participates in cofactor biosynthesis; NAD(+) biosynthesis; quinolinate from L-kynurenine: step 1/3. In terms of biological role, catalyzes the hydroxylation of L-kynurenine (L-Kyn) to form 3-hydroxy-L-kynurenine (L-3OHKyn). Required for synthesis of quinolinic acid. This Legionella pneumophila (strain Corby) protein is Kynurenine 3-monooxygenase.